The sequence spans 339 residues: Delta(9)-fatty-acid desaturase fat-6 (339 aa).

A run of 4 helical transmembrane segments spans residues 52 to 72, 77 to 97, 195 to 215, and 219 to 241; these read VALF…LIFE, TVIF…AGAH, YFPL…VYFW, and AFIA…TWCI.

It belongs to the fatty acid desaturase type 1 family. In terms of tissue distribution, expressed in the intestine in adult worms and in all four larval stages. Additional expression in the hypodermis in all life stages.

The protein localises to the membrane. It carries out the reaction octadecanoyl-CoA + 2 Fe(II)-[cytochrome b5] + O2 + 2 H(+) = (9Z)-octadecenoyl-CoA + 2 Fe(III)-[cytochrome b5] + 2 H2O. The catalysed reaction is hexadecanoyl-CoA + 2 Fe(II)-[cytochrome b5] + O2 + 2 H(+) = (9Z)-hexadecenoyl-CoA + 2 Fe(III)-[cytochrome b5] + 2 H2O. The enzyme catalyses heptadecanoyl-CoA + 2 Fe(II)-[cytochrome b5] + O2 + 2 H(+) = (9Z)-heptadecenoyl-CoA + 2 Fe(III)-[cytochrome b5] + 2 H2O. It catalyses the reaction (11E)-octadecenoyl-CoA + 2 Fe(II)-[cytochrome b5] + O2 + 2 H(+) = (9Z,11E)-octadecadienoyl-CoA + 2 Fe(III)-[cytochrome b5] + 2 H2O. The protein operates within lipid metabolism; monounsaturated fatty acid biosynthesis. It participates in lipid metabolism; fatty acid metabolism. Its function is as follows. Delta(9)-fatty acid desaturase that acts preferentially on stearoyl-CoA (octadecanoyl-CoA) producing the monounsaturated oleoyl-CoA ((9Z)-octadecenoyl-CoA), one of the most abundant monounsaturated fatty acid in Caenorhabditis elegans phospholipids and triacylglycerols. Also acts on palmitoyl-CoA (hexadecanoyl-CoA), heptadecanoyl-CoA and (11E)-octadecenoyl-CoA (trans-vaccenoyl-CoA), the monounsaturated fatty acids (MUFAs) produced are further used as substrates to synthesize polyunsaturated fatty acids (PUFAs) by several other desaturases and elongases. Unlike plants, Caenorhabditis elegans desaturases seem to use fatty acyl-CoAs as substrates. In Caenorhabditis elegans, this protein is Delta(9)-fatty-acid desaturase fat-6 (fat-6).